We begin with the raw amino-acid sequence, 551 residues long: Glutamate--tRNA ligase (551 aa).

Residues 100–110 (PNPNGPPTLGS) carry the 'HIGH' region motif.

Belongs to the class-I aminoacyl-tRNA synthetase family. Glutamate--tRNA ligase type 2 subfamily.

The protein localises to the cytoplasm. It catalyses the reaction tRNA(Glu) + L-glutamate + ATP = L-glutamyl-tRNA(Glu) + AMP + diphosphate. In terms of biological role, catalyzes the attachment of glutamate to tRNA(Glu) in a two-step reaction: glutamate is first activated by ATP to form Glu-AMP and then transferred to the acceptor end of tRNA(Glu). This is Glutamate--tRNA ligase from Archaeoglobus fulgidus (strain ATCC 49558 / DSM 4304 / JCM 9628 / NBRC 100126 / VC-16).